Reading from the N-terminus, the 193-residue chain is Small ribosomal subunit protein eS1 (193 aa).

Belongs to the eukaryotic ribosomal protein eS1 family.

This is Small ribosomal subunit protein eS1 from Methanobrevibacter smithii (strain ATCC 35061 / DSM 861 / OCM 144 / PS).